A 635-amino-acid chain; its full sequence is Threonine--tRNA ligase (635 aa).

A TGS domain is found at methionine 1–aspartate 61. Residues aspartate 242–proline 532 are catalytic. Cysteine 333, histidine 384, and histidine 509 together coordinate Zn(2+).

This sequence belongs to the class-II aminoacyl-tRNA synthetase family. As to quaternary structure, homodimer. It depends on Zn(2+) as a cofactor.

The protein resides in the cytoplasm. It carries out the reaction tRNA(Thr) + L-threonine + ATP = L-threonyl-tRNA(Thr) + AMP + diphosphate + H(+). Functionally, catalyzes the attachment of threonine to tRNA(Thr) in a two-step reaction: L-threonine is first activated by ATP to form Thr-AMP and then transferred to the acceptor end of tRNA(Thr). Also edits incorrectly charged L-seryl-tRNA(Thr). In Syntrophomonas wolfei subsp. wolfei (strain DSM 2245B / Goettingen), this protein is Threonine--tRNA ligase.